The following is a 201-amino-acid chain: MQLGLDFNLVEDLVAGVDEVGRGPLCGPVVTAAVILDPSRPILGLNDSKKLSEARREALFEEIREKALAWCIARAEVEEIDRLNILHATMLAMQRAVEGLSVIPRLALIDGNRCPKLAVPCAPVVKGDSQVPAIAAASILAKVSRDREMVELDRVYPGYGMAGHKGYPTAVHLEALSRLGPTPIHRRSFAPVRELLDVSVQ.

Positions 12–201 constitute an RNase H type-2 domain; sequence DLVAGVDEVG…VRELLDVSVQ (190 aa). Positions 18, 19, and 110 each coordinate a divalent metal cation.

The protein belongs to the RNase HII family. The cofactor is Mn(2+). It depends on Mg(2+) as a cofactor.

It localises to the cytoplasm. It carries out the reaction Endonucleolytic cleavage to 5'-phosphomonoester.. Its function is as follows. Endonuclease that specifically degrades the RNA of RNA-DNA hybrids. This Pseudomonas aeruginosa (strain ATCC 15692 / DSM 22644 / CIP 104116 / JCM 14847 / LMG 12228 / 1C / PRS 101 / PAO1) protein is Ribonuclease HII.